A 151-amino-acid polypeptide reads, in one-letter code: Single-stranded DNA-binding protein, mitochondrial (151 aa).

Residues Met1 to Gln16 constitute a mitochondrion transit peptide. One can recognise an SSB domain in the interval Leu30–Ser141. Phosphoserine occurs at positions 67 and 79. The residue at position 113 (Lys113) is an N6-acetyllysine. Lys122 bears the N6-succinyllysine mark.

As to quaternary structure, homotetramer. Interacts with MPG/AAG, through inhibition of its glycosylase activity it potentially prevents formation of DNA breaks in ssDNA, ensuring that base removal primarily occurs in dsDNA. Interacts with POLDIP2. Interacts with PRIMPOL.

It localises to the mitochondrion. The protein localises to the mitochondrion matrix. The protein resides in the mitochondrion nucleoid. Binds preferentially and cooperatively to pyrimidine rich single-stranded DNA (ss-DNA). In vitro, required to maintain the copy number of mitochondrial DNA (mtDNA) and plays a crucial role during mtDNA replication by stimulating the activity of the replisome components POLG and TWNK at the replication fork. Promotes the activity of the gamma complex polymerase POLG, largely by organizing the template DNA and eliminating secondary structures to favor ss-DNA conformations that facilitate POLG activity. In addition it is able to promote the 5'-3' unwinding activity of the mtDNA helicase TWNK. May also function in mtDNA repair. The polypeptide is Single-stranded DNA-binding protein, mitochondrial (Ssbp1) (Rattus norvegicus (Rat)).